The following is a 359-amino-acid chain: Protein mab-21-like 2 (359 aa).

This sequence belongs to the mab-21 family.

It is found in the nucleus. The protein localises to the cytoplasm. Required for several aspects of embryonic development including normal development of the eye. The protein is Protein mab-21-like 2 (mab21l2) of Xenopus tropicalis (Western clawed frog).